The sequence spans 181 residues: Photosystem I assembly protein Ycf4 (181 aa).

2 helical membrane passes run 19–41 (YAWCFILMTGGIGFCLTGVGSYF) and 61–83 (IVMMFYGTIAILFSLFLMYSIFT).

It belongs to the Ycf4 family.

It localises to the plastid. Its subcellular location is the chloroplast thylakoid membrane. Seems to be required for the assembly of the photosystem I complex. The protein is Photosystem I assembly protein Ycf4 of Guillardia theta (Cryptophyte).